We begin with the raw amino-acid sequence, 509 residues long: Coiled-coil domain-containing protein 181 (509 aa).

The span at 60–82 (EHTKQHSDPDKSLQDDVSPRRND) shows a compositional bias: basic and acidic residues. Disordered regions lie at residues 60–121 (EHTK…EEDE) and 285–367 (GEPL…EEKE). Positions 320 to 334 (RTQSARISPVTSTYC) are enriched in polar residues. Residues 335–375 (LSPRQKELQKQLEQKREKLKREEEQRKIEEEKEKKRENDIV) adopt a coiled-coil conformation. A compositionally biased stretch (basic and acidic residues) spans 338–367 (RQKELQKQLEQKREKLKREEEQRKIEEEKE).

This sequence belongs to the CCDC181 family. In terms of assembly, homodimer. Interacts with HOOK1. Interacts with HOOK2. Interacts with HOOK3.

The protein localises to the cytoplasm. It localises to the cytoskeleton. Its subcellular location is the cell projection. The protein resides in the cilium. It is found in the flagellum. Microtubule-binding protein that localizes to the microtubular manchette of elongating spermatids. The polypeptide is Coiled-coil domain-containing protein 181 (Macaca fascicularis (Crab-eating macaque)).